The chain runs to 1067 residues: Eukaryotic translation initiation factor 3 subunit A (1067 aa).

Positions 92–121 (LKKFIELAEKKVTEAQAKADEIQSSLESAA) form a coiled coil. The region spanning 339–523 (MTKAASFVLL…GVLTFDTDIF (185 aa)) is the PCI domain. Positions 608 to 899 (RVLIEKKKEA…QKQREEEAEA (292 aa)) form a coiled coil. Basic and acidic residues-rich tracts occupy residues 617–632 (AATD…EETR), 642–665 (EAEK…DEQD), 795–901 (EVSE…EARR), and 916–926 (AEPERPAERTA). Disordered stretches follow at residues 617 to 665 (AATD…DEQD) and 795 to 1067 (EVSE…QQQQ). Composition is skewed to low complexity over residues 965–976 (AAPAAAPAPAAE) and 1025–1046 (SSSS…AASS).

The protein belongs to the eIF-3 subunit A family. As to quaternary structure, component of the eukaryotic translation initiation factor 3 (eIF-3) complex.

The protein resides in the cytoplasm. In terms of biological role, RNA-binding component of the eukaryotic translation initiation factor 3 (eIF-3) complex, which is involved in protein synthesis of a specialized repertoire of mRNAs and, together with other initiation factors, stimulates binding of mRNA and methionyl-tRNAi to the 40S ribosome. The eIF-3 complex specifically targets and initiates translation of a subset of mRNAs involved in cell proliferation. The chain is Eukaryotic translation initiation factor 3 subunit A (tif32) from Neosartorya fischeri (strain ATCC 1020 / DSM 3700 / CBS 544.65 / FGSC A1164 / JCM 1740 / NRRL 181 / WB 181) (Aspergillus fischerianus).